The following is a 790-amino-acid chain: IQ motif and ubiquitin-like domain-containing protein (790 aa).

The span at 1–17 shows a compositional bias: polar residues; the sequence is MSNQPKKYETQNIANST. The segment at 1–49 is disordered; sequence MSNQPKKYETQNIANSTEESDAFDIVTIPVPSEEPQESDQTEEHESGIE. Residues 130–206 form the Ubiquitin-like domain; sequence ATVKVVLIPV…IQVEIFSTNP (77 aa). An IQ domain is found at 337–366; it reads RLKAVIVIQTYYRQWHAKIFVEDLRRQKSL.

In terms of assembly, component of the axonemal radial spoke 1 (RS1) complex, at least composed of spoke head proteins RSPH1, RSPH3, RSPH9 and the cilia-specific component RSPH4A or sperm-specific component RSPH6A, spoke stalk proteins RSPH14, DNAJB13, DYDC1, ROPN1L and NME5, and the anchor protein IQUB. Does not appear to be part of radial spoke complexes 2 or 3 (RS2 or RS3). Interacts with CALM1. Interacts with DNAJB13. Interacts with DYNLL2. Interacts with NME5. Interacts with RSPH3. Interacts with RSPH9. Interacts with ZMYND10. Interacts with calmodulin; the interaction occurs in conditions of low but not high calcium.

The protein resides in the cytoplasm. Its subcellular location is the cytoskeleton. It localises to the flagellum axoneme. The protein localises to the cell projection. It is found in the cilium. In terms of biological role, adapter protein that anchors the radial spoke 1 (RS1) complex to the A microtubule of outer doublet microtubules in axonemes. The triple radial spokes (RS1, RS2 and RS3) are required to modulate beating of the sperm flagellum. May play a role in inhibiting signaling via MAPK1/ERK2 and MAPK3/ERK1. Additionally, may play a role in the functioning of cilia. Not required for the functioning of tracheal or ependymal cilia. The chain is IQ motif and ubiquitin-like domain-containing protein (IQUB) from Macaca fascicularis (Crab-eating macaque).